The following is a 601-amino-acid chain: Protein nubbin (601 aa).

Basic and acidic residues predominate over residues 1 to 25 (MVMSELRWHTASPEDNKNSLKRDLL). Disordered stretches follow at residues 1 to 32 (MVMS…PTSA), 49 to 94 (SRSP…AKRQ), 121 to 158 (KQEE…ATAS), 351 to 425 (PASS…ETTD), and 581 to 601 (INPS…YMMH). The segment covering 49 to 68 (SRSPSPLQSNASDCDDNNSS) has biased composition (low complexity). Positions 135-157 (NLTSDNSRHSTQSPSNSVKSATA) are enriched in polar residues. Over residues 384–415 (TPSTPTSGTQMSQGTTTPQPKTVASAAAARAA) the composition is skewed to low complexity. One can recognise a POU-specific domain in the interval 421 to 495 (EETTDLEELE…LLQKWLDDAD (75 aa)). Positions 523–582 (RRKKRTSIETTIRGALEKAFLANQKPTSEEITQLADRLSMEKEVVRVWFCNRRQKEKRIN) form a DNA-binding region, homeobox. Over residues 591–601 (ADDDESSYMMH) the composition is skewed to acidic residues.

Belongs to the POU transcription factor family. Class-2 subfamily. As to expression, initial expression in cellular blastoderm stage, then in ectodermal stripes during germband extension. Broad expression in the neuroectoderm followed by limitation to discrete subsets of CNS cells, and expression in specific PNS neurons and support cells.

Its subcellular location is the nucleus. Its function is as follows. DNA-binding regulatory protein implicated in early development. Involved in neuronal cell fate decision. Repressed directly or indirectly by the BX-C homeotic proteins. This chain is Protein nubbin (nub), found in Drosophila melanogaster (Fruit fly).